The primary structure comprises 427 residues: Inward rectifier potassium channel 2 (427 aa).

The Cytoplasmic segment spans residues Met-1–Trp-81. The residue at position 76 (Cys-76) is an S-nitrosocysteine. Residues Arg-82–Ile-106 form a helical membrane-spanning segment. Topologically, residues Ala-107–Ser-128 are extracellular. Residues Phe-129–Gln-140 constitute an intramembrane region (helical; Pore-forming). An intramembrane region (pore-forming) is located at residues Thr-141–Phe-147. Residues Thr-142–Phe-147 carry the Selectivity filter motif. Residues Arg-148–Val-156 are Extracellular-facing. The chain crosses the membrane as a helical span at residues Ala-157 to Ala-178. Over Val-179–Ile-427 the chain is Cytoplasmic. The interval Ala-181–Leu-208 is polyphosphoinositide (PIP2)-binding. The disordered stretch occupies residues Ser-384–Ile-427. Positions Ser-425 to Ile-427 match the PDZ-binding motif.

This sequence belongs to the inward rectifier-type potassium channel (TC 1.A.2.1) family. KCNJ2 subfamily. In terms of assembly, homotetramer. Homomultimeric and heteromultimeric association with KCNJ4/Kir2.3. Can form heteromeric channels with Kir2.6/KCNJ18. Associates, via its PDZ-recognition domain, with a complex containing LIN7A, LIN7B, LIN7C, DLG1, CASK and APBA1. S-nitrosylation increases the open probability and inward rectifying currents. As to expression, highly expressed in the ventricle and skeletal muscle, moderately in cerebrum and cerebellum. Only low levels are detected in kidney or lung.

The protein resides in the cell membrane. It localises to the sarcolemma. The protein localises to the T-tubule. The enzyme catalyses K(+)(in) = K(+)(out). Its activity is regulated as follows. Activated by phosphatidylinositol 4,5 biphosphate (PtdIns(4,5)P2). In terms of biological role, inward rectifier potassium channels are characterized by a greater tendency to allow potassium to flow into the cell rather than out of it. Their voltage dependence is regulated by the concentration of extracellular potassium; as external potassium is raised, the voltage range of the channel opening shifts to more positive voltages. The inward rectification is mainly due to the blockage of outward current by internal magnesium. Can be blocked by extracellular barium and cesium. Probably participates in establishing action potential waveform and excitability of neuronal and muscle tissues. The polypeptide is Inward rectifier potassium channel 2 (KCNJ2) (Oryctolagus cuniculus (Rabbit)).